The chain runs to 858 residues: MSYTMEPLGNPSYRRVMTETRATYSRASASPSSGFRSQSWSRGSGSTVSSSYKRTNLGAPRTAYGSTVLSSAESLDVSQSSLLNGAAELKLSRSNEKEQLQGLNDRFAGYIEKVHYLEQQNKEIEAELAALRQKHAGRAQLGDAYEQELRELRGALEQVSHEKAQIQLDSEHIEEDIQRLRERFEDEARLRDETEATIAALRKEMEEASLMRAELDKKVQSLQDEVAFLRGNHEEEVAELLAQLQASHATVERKDYLKTDLTTALKEIRAQLECQSDHNMHQAEEWFKCRYAKLTEAAEQNKEAIRSAKEEIAEYRRQLQSKSIELESVRGTKESLERQLSDIEERHNNDLTTYQDTIHQLENELRGTKWEMARHLREYQDLLNVKMALDIEIAAYRKLLEGEETRFSAFSGSITGPIFTHRQPSVTIASTKIQKTKIEPPKLKVQHKFVEEIIEETKVEDEKSEMEDALSAIAEEMAAKAQEEEQEEEKAEEEAVEEEAVSEKAAEQAAEEEEKEEEEAEEEEAAKSDAAEEGGSKKEEIEEKEEGEEAEEEEAEAKGKAEEAGAKVEKVKSPPAKSPPKSPPKSPVTEQAKAVQKAAAEVGKDQKAEKAAEKAAKEEKAASPEKPATPKVTSPEKPATPEKPPTPEKAITPEKVRSPEKPTTPEKVVSPEKPASPEKPRTPEKPASPEKPATPEKPRTPEKPATPEKPRSPEKPSSPLKDEKAVVEESITVTKVTKVTAEVEVSKEARKEDIAVNGEVEEKKDEAKEKEAEEEEKGVVTNGLDVSPVDEKGEKVVVTKKAEKITSEGGDSTTTYITKSVTVTQKVEEHEESFEEKLVSTKKVEKVTSHAVVKEIKE.

At serine 2 the chain carries N-acetylserine. Residues 2 to 99 (SYTMEPLGNP…KLSRSNEKEQ (98 aa)) form a head region. A disordered region spans residues 22 to 57 (ATYSRASASPSSGFRSQSWSRGSGSTVSSSYKRTNL). Positions 30-54 (SPSSGFRSQSWSRGSGSTVSSSYKR) are enriched in low complexity. Residue threonine 47 is glycosylated (O-linked (GlcNAc) threonine). The 312-residue stretch at 96–407 (EKEQLQGLND…KLLEGEETRF (312 aa)) folds into the IF rod domain. The segment at 100-131 (LQGLNDRFAGYIEKVHYLEQQNKEIEAELAAL) is coil 1A. Residues 132-144 (RQKHAGRAQLGDA) are linker 1. The coil 1B stretch occupies residues 145–243 (YEQELRELRG…EEEVAELLAQ (99 aa)). The segment at 244-260 (LQASHATVERKDYLKTD) is linker 12. Residues 261-282 (LTTALKEIRAQLECQSDHNMHQ) are coil 2A. Residues 283-286 (AEEW) are linker 2. The interval 287–407 (FKCRYAKLTE…KLLEGEETRF (121 aa)) is coil 2B. The segment at 408–858 (SAFSGSITGP…SHAVVKEIKE (451 aa)) is tail. O-linked (GlcNAc) threonine glycosylation is present at threonine 427. The disordered stretch occupies residues 478 to 788 (AAKAQEEEQE…VVTNGLDVSP (311 aa)). 2 stretches are compositionally biased toward acidic residues: residues 484-500 (EEQE…EEEA) and 509-524 (AAEE…EEEE). The span at 525 to 541 (AAKSDAAEEGGSKKEEI) shows a compositional bias: basic and acidic residues. The segment covering 542 to 555 (EEKEEGEEAEEEEA) has biased composition (acidic residues). Residues 556–572 (EAKGKAEEAGAKVEKVK) are compositionally biased toward basic and acidic residues. Residues 576–586 (AKSPPKSPPKS) are compositionally biased toward pro residues. Positions 590-601 (EQAKAVQKAAAE) are enriched in low complexity. Positions 602 to 623 (VGKDQKAEKAAEKAAKEEKAAS) are enriched in basic and acidic residues. Residues 624-637 (PEKPATPKVTSPEK) are compositionally biased toward low complexity. Composition is skewed to basic and acidic residues over residues 651–664 (ITPE…KPTT) and 675–727 (ASPE…KAVV). Residues 728–743 (EESITVTKVTKVTAEV) are compositionally biased toward low complexity. Residues 744–771 (EVSKEARKEDIAVNGEVEEKKDEAKEKE) are compositionally biased toward basic and acidic residues.

The protein belongs to the intermediate filament family. There are a number of repeats of the tripeptide K-S-P, NFM is phosphorylated on a number of the serines in this motif. It is thought that phosphorylation of NFM results in the formation of interfilament cross bridges that are important in the maintenance of axonal caliber. Post-translationally, phosphorylation seems to play a major role in the functioning of the larger neurofilament polypeptides (NF-M and NF-H), the levels of phosphorylation being altered developmentally and coincident with a change in the neurofilament function.

It is found in the cytoplasm. The protein resides in the cytoskeleton. Its subcellular location is the cell projection. The protein localises to the axon. Neurofilaments usually contain three intermediate filament proteins: NEFL, NEFM, and NEFH which are involved in the maintenance of neuronal caliber. May additionally cooperate with other neuronal intermediate filament proteins to form neuronal filamentous networks. The protein is Neurofilament medium polypeptide (NEFM) of Gallus gallus (Chicken).